The primary structure comprises 164 residues: Diphosphoinositol polyphosphate phosphohydrolase 3-beta (164 aa).

Substrate-binding positions include arginine 9, 17-19, and 38-40; these read KKR and SSR. In terms of domain architecture, Nudix hydrolase spans 17 to 144; sequence KKRAACLCFR…VHAEYLQKLK (128 aa). Mg(2+)-binding residues include glycine 49 and glutamate 65. The short motif at 50–71 is the Nudix box element; sequence GGMEPEEEPGGAAVREVFEEAG. Residue glutamate 68 is the Proton acceptor of the active site. A Mg(2+)-binding site is contributed by glutamate 69. Substrate-binding positions include 89–91, arginine 115, and lysine 133; that span reads RKH. Positions 144-164 are disordered; that stretch reads KLGGSPTNGNSVAPSPPEGDP.

This sequence belongs to the Nudix hydrolase family. DIPP subfamily. The cofactor is Mg(2+). Requires Mn(2+) as cofactor.

Its subcellular location is the cytoplasm. The enzyme catalyses diphospho-myo-inositol polyphosphate + H2O = myo-inositol polyphosphate + phosphate.. It catalyses the reaction P(1),P(6)-bis(5'-adenosyl) hexaphosphate + H2O = adenosine 5'-pentaphosphate + AMP + 2 H(+). It carries out the reaction P(1),P(5)-bis(5'-adenosyl) pentaphosphate + H2O = adenosine 5'-tetraphosphate + AMP + 2 H(+). In terms of biological role, cleaves a beta-phosphate from the diphosphate groups in PP-InsP5 (diphosphoinositol pentakisphosphate), suggesting that it may play a role in signal transduction. Also able to catalyze the hydrolysis of dinucleoside oligophosphates, with Ap6A and Ap5A being the preferred substrates. The major reaction products are ADP and p4a from Ap6A and ADP and ATP from Ap5A. Also able to hydrolyze 5-phosphoribose 1-diphosphate. The polypeptide is Diphosphoinositol polyphosphate phosphohydrolase 3-beta (Bos taurus (Bovine)).